The chain runs to 283 residues: Pantothenate synthetase (283 aa).

31 to 38 (MGALHDGH) provides a ligand contact to ATP. The active-site Proton donor is H38. A (R)-pantoate-binding site is contributed by Q62. Beta-alanine is bound at residue Q62. Position 148 to 151 (148 to 151 (GKKD)) interacts with ATP. (R)-pantoate is bound at residue Q154. ATP-binding positions include V177 and 185–188 (KSSR).

This sequence belongs to the pantothenate synthetase family. As to quaternary structure, homodimer.

It localises to the cytoplasm. The catalysed reaction is (R)-pantoate + beta-alanine + ATP = (R)-pantothenate + AMP + diphosphate + H(+). The protein operates within cofactor biosynthesis; (R)-pantothenate biosynthesis; (R)-pantothenate from (R)-pantoate and beta-alanine: step 1/1. Catalyzes the condensation of pantoate with beta-alanine in an ATP-dependent reaction via a pantoyl-adenylate intermediate. This chain is Pantothenate synthetase, found in Staphylococcus aureus (strain bovine RF122 / ET3-1).